Reading from the N-terminus, the 540-residue chain is DNA topoisomerase 1 (540 aa).

Residues 1 to 110 enclose the Toprim domain; sequence MELFIVESPT…NIKRAVFYEI (110 aa). Residues E7 and D79 each coordinate Mg(2+). The Topo IA-type catalytic domain maps to 126–536; that stretch reads NMNLVYAQFA…FMEKIFGKEL (411 aa). Residues 161-166 form an interaction with DNA region; it reads SAGRVQ. The O-(5'-phospho-DNA)-tyrosine intermediate role is filled by Y281.

This sequence belongs to the type IA topoisomerase family. Monomer. Mg(2+) is required as a cofactor.

It catalyses the reaction ATP-independent breakage of single-stranded DNA, followed by passage and rejoining.. Functionally, releases the supercoiling and torsional tension of DNA, which is introduced during the DNA replication and transcription, by transiently cleaving and rejoining one strand of the DNA duplex. Introduces a single-strand break via transesterification at a target site in duplex DNA. The scissile phosphodiester is attacked by the catalytic tyrosine of the enzyme, resulting in the formation of a DNA-(5'-phosphotyrosyl)-enzyme intermediate and the expulsion of a 3'-OH DNA strand. The free DNA strand then undergoes passage around the unbroken strand, thus removing DNA supercoils. Finally, in the religation step, the DNA 3'-OH attacks the covalent intermediate to expel the active-site tyrosine and restore the DNA phosphodiester backbone. The sequence is that of DNA topoisomerase 1 from Aquifex aeolicus (strain VF5).